Reading from the N-terminus, the 187-residue chain is Large ribosomal subunit protein uL24c (187 aa).

The N-terminal 41 residues, Met-1–Ala-41, are a transit peptide targeting the chloroplast.

Belongs to the universal ribosomal protein uL24 family. In terms of assembly, part of the 50S ribosomal subunit.

The protein localises to the plastid. It localises to the chloroplast. Its function is as follows. One of two assembly initiator proteins, it binds directly to the 5'-end of the 23S rRNA, where it nucleates assembly of the 50S subunit. The chain is Large ribosomal subunit protein uL24c (RPL24) from Nicotiana tabacum (Common tobacco).